Consider the following 211-residue polypeptide: tRNA (guanine-N(7)-)-methyltransferase (211 aa).

Positions 44, 69, 96, and 118 each coordinate S-adenosyl-L-methionine. Residue Asp118 is part of the active site. Position 122 (Lys122) interacts with substrate. Residues 124–129 form an interaction with RNA region; it reads KHEKRR. Substrate contacts are provided by residues Asp154 and 191 to 194; that span reads TEYE.

This sequence belongs to the class I-like SAM-binding methyltransferase superfamily. TrmB family.

It carries out the reaction guanosine(46) in tRNA + S-adenosyl-L-methionine = N(7)-methylguanosine(46) in tRNA + S-adenosyl-L-homocysteine. Its pathway is tRNA modification; N(7)-methylguanine-tRNA biosynthesis. Functionally, catalyzes the formation of N(7)-methylguanine at position 46 (m7G46) in tRNA. The chain is tRNA (guanine-N(7)-)-methyltransferase from Streptococcus agalactiae serotype Ia (strain ATCC 27591 / A909 / CDC SS700).